We begin with the raw amino-acid sequence, 133 residues long: Magnetosome protein MamC (133 aa).

Residues Met1–Asn5 lie on the Cytoplasmic side of the membrane. The helical transmembrane segment at Leu6–Gly26 threads the bilayer. Topologically, residues Ser27–Tyr67 are lumenal. The tract at residues Lys37–Gly57 is magnetite interacting component (MIC) binds magnetite. The chain crosses the membrane as a helical span at residues Ala68–Val88. At Ala89–Pro133 the chain is on the cytoplasmic side. The tract at residues Leu105–Pro133 is disordered.

Belongs to the magnetosome MamC family. In terms of assembly, probably interacts with MamA.

The protein localises to the magnetosome membrane. Its function is as follows. Probably helps control the size of magnetite crystals; in vitro synthesis of magnetite yields larger and more well-developed magnetite crystals in the presence of purified MamC. Binds Fe(3+). The lumenal domain probably binds magnetite crystals, affecting crystal size and shape. Purified MamC self-assembles into micelles in the presence of ferric chloride hexahydrate (FeCl(3).6H(2)O); both oxygen and iron are present in the proteinaceous micelles. Whether this is relevant in vivo is unknown. This is Magnetosome protein MamC from Magnetococcus marinus (strain ATCC BAA-1437 / JCM 17883 / MC-1).